The following is a 28-amino-acid chain: Basic phospholipase A2 homolog BmatTX-II (28 aa).

As to quaternary structure, monomer. As to expression, expressed by the venom gland.

It localises to the secreted. Snake venom phospholipase A2 homolog that lacks enzymatic activity. Shows high myotoxic activity, neutrophil activation (demonstrated by activation induction of IL-1beta production), and slight cytotoxicity against Jurkat (leukemia T) and SK-BR-3 (breast adenocarcinoma) tumor cell lines. A model of myotoxic mechanism has been proposed: an apo Lys49-PLA2 is activated by the entrance of a hydrophobic molecule (e.g. fatty acid) at the hydrophobic channel of the protein leading to a reorientation of a monomer. This reorientation causes a transition between 'inactive' to 'active' states, causing alignment of C-terminal and membrane-docking sites (MDoS) side-by-side and putting the membrane-disruption sites (MDiS) in the same plane, exposed to solvent and in a symmetric position for both monomers. The MDoS region stabilizes the toxin on membrane by the interaction of charged residues with phospholipid head groups. Subsequently, the MDiS region destabilizes the membrane with penetration of hydrophobic residues. This insertion causes a disorganization of the membrane, allowing an uncontrolled influx of ions (i.e. calcium and sodium), and eventually triggering irreversible intracellular alterations and cell death. This chain is Basic phospholipase A2 homolog BmatTX-II, found in Bothrops mattogrossensis (Pitviper).